The chain runs to 374 residues: Tomoregulin-2 (374 aa).

The first 39 residues, 1–39 (MVLWESPRQCSSWTLCEGFCWLLLLPVMLLIVARPVKLA), serve as a signal peptide directing secretion. The Extracellular segment spans residues 40 to 320 (AFPTSLSDCQ…VPGPVRFQYV (281 aa)). N-linked (GlcNAc...) asparagine glycosylation occurs at Asn-55. Kazal-like domains follow at residues 90–137 (VCQF…SCAT) and 181–229 (VCNI…RCQD). 9 disulfide bridges follow: Cys-91–Cys-121, Cys-95–Cys-114, Cys-103–Cys-135, Cys-182–Cys-213, Cys-186–Cys-206, Cys-195–Cys-227, Cys-265–Cys-278, Cys-273–Cys-289, and Cys-291–Cys-300. The EGF-like domain occupies 261 to 301 (HHIPCPEHYNGFCMHGKCEHSINMQEPSCRCDAGYTGQHCE). Residues 303-320 (KDYSVLYVVPGPVRFQYV) are required for shedding. The chain crosses the membrane as a helical span at residues 321–341 (LIAAVIGTIQIAVICVVVLCI). The Cytoplasmic segment spans residues 342-374 (TRKCPRSNRIHRQKQNTGHYSSDNTTRASTRLI). The tract at residues 353-374 (RQKQNTGHYSSDNTTRASTRLI) is disordered. Polar residues predominate over residues 356 to 374 (QNTGHYSSDNTTRASTRLI).

It belongs to the tomoregulin family. O-glycosylated; contains chondroitin sulfate glycosaminoglycans. In terms of processing, a soluble form (TMEFF2-ECD) is produced by proteolytic shedding. This shedding can be induced by phorbol ester or pro-inflammatory cytokines such as TNFalpha, and is mediated by a metalloproteinase ADAM.

The protein resides in the membrane. Functionally, may be a survival factor for hippocampal and mesencephalic neurons. The shedded form may up-regulate cell proliferation. This is Tomoregulin-2 (TMEFF2) from Bos taurus (Bovine).